We begin with the raw amino-acid sequence, 465 residues long: Adenosylhomocysteinase (465 aa).

The substrate site is built by threonine 56, aspartate 131, and glutamate 191. Threonine 192–threonine 194 is an NAD(+) binding site. Residues lysine 221 and aspartate 225 each contribute to the substrate site. Residues asparagine 226, glycine 255 to glycine 260, glutamate 278, asparagine 313, isoleucine 334 to histidine 336, and asparagine 379 contribute to the NAD(+) site.

It belongs to the adenosylhomocysteinase family. The cofactor is NAD(+).

The protein localises to the cytoplasm. It catalyses the reaction S-adenosyl-L-homocysteine + H2O = L-homocysteine + adenosine. It participates in amino-acid biosynthesis; L-homocysteine biosynthesis; L-homocysteine from S-adenosyl-L-homocysteine: step 1/1. Its function is as follows. May play a key role in the regulation of the intracellular concentration of adenosylhomocysteine. This chain is Adenosylhomocysteinase, found in Bartonella tribocorum (strain CIP 105476 / IBS 506).